The chain runs to 399 residues: Tyrosine--tRNA ligase 2 (399 aa).

The short motif at 42–51 is the 'HIGH' region element; it reads PTAPDLHLGH. A 'KMSKS' region motif is present at residues 226–230; sequence KMSKS. Lys229 contributes to the ATP binding site. The S4 RNA-binding domain occupies 336–396; the sequence is MPVASVLNKA…GKKAFARITL (61 aa).

Belongs to the class-I aminoacyl-tRNA synthetase family. TyrS type 2 subfamily. As to quaternary structure, homodimer.

It is found in the cytoplasm. The catalysed reaction is tRNA(Tyr) + L-tyrosine + ATP = L-tyrosyl-tRNA(Tyr) + AMP + diphosphate + H(+). Its function is as follows. Catalyzes the attachment of tyrosine to tRNA(Tyr) in a two-step reaction: tyrosine is first activated by ATP to form Tyr-AMP and then transferred to the acceptor end of tRNA(Tyr). The sequence is that of Tyrosine--tRNA ligase 2 from Pseudomonas aeruginosa (strain ATCC 15692 / DSM 22644 / CIP 104116 / JCM 14847 / LMG 12228 / 1C / PRS 101 / PAO1).